A 545-amino-acid chain; its full sequence is Sterol O-acyltransferase 1 (545 aa).

Residue Met-1 is modified to N-acetylmethionine. A disordered region spans residues 1 to 24; the sequence is MVGEETSLRNRLSRSAENPEQDEA. Residues 1 to 133 are Cytoplasmic-facing; the sequence is MVGEETSLRN…LDELFEVDHI (133 aa). Phosphoserine is present on Ser-7. Residues 9–18 are compositionally biased toward polar residues; the sequence is RNRLSRSAEN. Residue His-132 participates in cholesterol binding. A helical transmembrane segment spans residues 134-155; sequence RTIYHMFIALLIIFILSTLVVD. Residues 156–175 lie on the Lumenal side of the membrane; the sequence is YIDEGRLVLEFSLLAYAFGQ. Residues 176 to 201 form a helical membrane-spanning segment; the sequence is FPIVIWTWWAMFLSTLAIPYFLFQRW. The Cytoplasmic portion of the chain corresponds to 202–213; it reads AHGYSKSSHPLI. The chain crosses the membrane as a helical span at residues 214-239; it reads YSLIHGAFFLVFQLGILGFIPTYVVL. Over 240-247 the chain is Lumenal; sequence AYTLPPAS. The chain crosses the membrane as a helical span at residues 248–271; that stretch reads RFILILEQIRLVMKAHSYVRENVP. Topologically, residues 272–314 are cytoplasmic; the sequence is RVLSAAKEKSSTVPVPTVNQYLYFLFAPTLIYRDSYPRTPTVR. A helical transmembrane segment spans residues 315–347; the sequence is WGYVAMQFLQVFGCLFYVYYIFERLCAPLFRNI. Residues 348–364 lie on the Lumenal side of the membrane; it reads KQEPFSARVLVLCVFNS. A helical transmembrane segment spans residues 365–390; it reads ILPGVLMLFLSFFAFLHCWLNAFAEM. Residues 391–438 are Cytoplasmic-facing; the sequence is LRFGDRMFYKDWWNSTSYSNYYRTWNVVVHDWLYYYVYKDLLWFFSKR. The short motif at 398–404 is the FYXDWWN motif element; sequence FYKDWWN. 6 residues coordinate an acyl-CoA: Asn-410, Arg-413, Asn-416, His-420, Tyr-428, and Ser-451. The helical transmembrane segment at 439-463 threads the bilayer; that stretch reads FRPAAMLAVFALSAVVHEYALAVCL. Residue His-455 is part of the active site. Topologically, residues 464–469 are lumenal; it reads SYFYPV. Residues 470–485 traverse the membrane as a helical segment; the sequence is LFVLFMFFGMAFNFIV. Over 486–491 the chain is Cytoplasmic; it reads NDSRKR. A helical membrane pass occupies residues 492 to 523; the sequence is PVWNIMVRASLFLGHGVILCFYSQEWYARQRC. Cys-523 and Cys-541 form a disulfide bridge. Residues 524 to 545 are Lumenal-facing; sequence PLKNPTFLDYVRPRTWTCRYVF.

The protein belongs to the membrane-bound acyltransferase family. Sterol o-acyltransferase subfamily. In terms of assembly, may form homo- or heterodimers. Interacts with UBIAD1.

It is found in the endoplasmic reticulum membrane. The enzyme catalyses a sterol + a long-chain fatty acyl-CoA = a long-chain 3-hydroxysterol ester + CoA. It catalyses the reaction cholesterol + an acyl-CoA = a cholesterol ester + CoA. The catalysed reaction is cholesterol + (9Z)-octadecenoyl-CoA = cholesteryl (9Z-octadecenoate) + CoA. It carries out the reaction cholesterol + hexadecanoyl-CoA = cholesteryl hexadecanoate + CoA. The enzyme catalyses octadecanoyl-CoA + cholesterol = cholesteryl octadecanoate + CoA. It catalyses the reaction (9Z,12Z)-octadecadienoyl-CoA + cholesterol = cholesteryl (9Z,12Z)-octadecadienoate + CoA. The catalysed reaction is (5Z,8Z,11Z,14Z)-eicosatetraenoyl-CoA + cholesterol = cholesteryl (5Z,8Z,11Z,14Z)-eicosatetraenoate + CoA. It carries out the reaction (9Z)-hexadecenoyl-CoA + cholesterol = cholesteryl (9Z)-hexadecenoate + CoA. The enzyme catalyses (11Z)-octadecenoyl-CoA + cholesterol = cholesteryl (11Z)-octadecenoate + CoA. It catalyses the reaction (7Z)-octadecenoyl-CoA + cholesterol = cholesteryl (7Z)-octadecenoate + CoA. In terms of biological role, catalyzes the formation of fatty acid-cholesterol esters, which are less soluble in membranes than cholesterol. Plays a role in lipoprotein assembly and dietary cholesterol absorption. Preferentially utilizes oleoyl-CoA ((9Z)-octadecenoyl-CoA) as substrate: shows a higher activity towards an acyl-CoA substrate with a double bond at the delta-9 position (9Z) than towards saturated acyl-CoA or an unsaturated acyl-CoA with a double bond at the delta-7 (7Z) or delta-11 (11Z) positions. This is Sterol O-acyltransferase 1 from Rattus norvegicus (Rat).